Here is a 901-residue protein sequence, read N- to C-terminus: MLIPSKLSRPVRLDHTVVRERLLAKLSGANNFRLALVTSPAGYGKTTLVSQWAAGKNELGWYSLDEGDNQQERFASYLIAAIQQATGGHCSTSEAMAQKRQYASLTSLFAQLFIELAQWHRPLYLVIDDYHLITNPVIHDAMRFFLRHQPENFTLVVLSRNLPQLGIANLRVRDQLLEIGSQQLAFNHQEAKQFFDRRLSSPIEAAESSRMCDDVAGWATALQLIALSARQNHTSAHHSARRLAGINASHLSDYLVDEVLDNVDVSTRHFLLKSAILRSMNDALIVRVTGEENGQMRLEEIERQGLFLQRMDDTGEWFSYHPLFGSFLRQRCQWELAAELPEIHRAAAESWMEQGFPSEAIHHALAAGDAQMLRDILLNHAWGLFNHSELALLEESLKALPWESLLENPRLVLLQAWLMQSQHRYSEVNTLLARAEQEIKGVMDGTLHAEFNALRAQVAINDGNPEEAERLAKLALDELPLAWFYSRIVATSVHGEVLHCKGDLSQSLSLMQQTEQMARHHDVWHYALWSLIQQSEIQFAQGFLQAAWETQERAFQLIKEQHLEQLPMHEFLVRIRAQLLWAWARLDEAEASARSGIAVLSTFQPQQQLQCLTLLVQCSLARGDLDNARSQLNRLENLLGNGRYHCDWISNADKVRVIYWQLTGDKKSAANWLRHTPKPAFANNHFLQGQWRNIARAQILLGEFEPAEIVLEELNENARSLRLMSDLNCNLLLLNQLYWQSGRKNDAQRVLLDALQLANRTGFISHFVIEGEAMAQQLRQLIQLNTLPEMEQHRAQRILREINQHHRHKFAHFDEGFVERLLNHPDVPELIRTSPLTQREWQVLGLIYSGYSNEQIAGELAVAATTIKTHIRNLYQKLGVAHRQDAVQHAQQLLKMMGYGV.

39–46 (SPAGYGKT) is an ATP binding site. In terms of domain architecture, HTH luxR-type spans 829–894 (ELIRTSPLTQ…DAVQHAQQLL (66 aa)). Positions 853–872 (NEQIAGELAVAATTIKTHIR) form a DNA-binding region, H-T-H motif.

It belongs to the MalT family. As to quaternary structure, monomer in solution. Oligomerizes to an active state in the presence of the positive effectors ATP and maltotriose.

With respect to regulation, activated by ATP and maltotriose, which are both required for DNA binding. Positively regulates the transcription of the maltose regulon whose gene products are responsible for uptake and catabolism of malto-oligosaccharides. Specifically binds to the promoter region of its target genes, recognizing a short DNA motif called the MalT box. The polypeptide is HTH-type transcriptional regulator MalT (Salmonella typhimurium (strain LT2 / SGSC1412 / ATCC 700720)).